We begin with the raw amino-acid sequence, 320 residues long: Acyl-coenzyme A thioesterase 8 (320 aa).

Active-site charge relay system residues include aspartate 233, serine 255, and glutamine 305. A Microbody targeting signal motif is present at residues 318-320 (SKL).

The protein belongs to the C/M/P thioester hydrolase family. In terms of assembly, homodimer.

The protein localises to the peroxisome matrix. The catalysed reaction is choloyl-CoA + H2O = cholate + CoA + H(+). It catalyses the reaction chenodeoxycholoyl-CoA + H2O = chenodeoxycholate + CoA + H(+). It carries out the reaction acetyl-CoA + H2O = acetate + CoA + H(+). The enzyme catalyses butanoyl-CoA + H2O = butanoate + CoA + H(+). The catalysed reaction is hexanoyl-CoA + H2O = hexanoate + CoA + H(+). It catalyses the reaction octanoyl-CoA + H2O = octanoate + CoA + H(+). It carries out the reaction decanoyl-CoA + H2O = decanoate + CoA + H(+). The enzyme catalyses dodecanoyl-CoA + H2O = dodecanoate + CoA + H(+). The catalysed reaction is tetradecanoyl-CoA + H2O = tetradecanoate + CoA + H(+). It catalyses the reaction 4,8-dimethylnonanoyl-CoA + H2O = 4,8-dimethylnonanoate + CoA + H(+). It carries out the reaction 2,6-dimethylheptanoyl-CoA + H2O = 2,6-dimethylheptanoate + CoA + H(+). The enzyme catalyses malonyl-CoA + H2O = malonate + CoA + H(+). The catalysed reaction is acetoacetyl-CoA + H2O = acetoacetate + CoA + H(+). It catalyses the reaction propanoyl-CoA + H2O = propanoate + CoA + H(+). It carries out the reaction succinyl-CoA + H2O = succinate + CoA + H(+). The enzyme catalyses glutaryl-CoA + H2O = glutarate + CoA + H(+). The catalysed reaction is hexanedioyl-CoA + H2O = hexanedioate + CoA + H(+). It catalyses the reaction octanedioyl-CoA + H2O = octanedioate + CoA + H(+). It carries out the reaction decanedioyl-CoA + H2O = decanedioate + CoA + H(+). The enzyme catalyses dodecanedioyl-CoA + H2O = dodecanedioate + CoA + H(+). The catalysed reaction is (9Z)-tetradecenoyl-CoA + H2O = (9Z)-tetradecenoate + CoA + H(+). It catalyses the reaction hexadecanoyl-CoA + H2O = hexadecanoate + CoA + H(+). It carries out the reaction (9Z)-hexadecenoyl-CoA + H2O = (9Z)-hexadecenoate + CoA + H(+). The enzyme catalyses octadecanoyl-CoA + H2O = octadecanoate + CoA + H(+). The catalysed reaction is (9Z)-octadecenoyl-CoA + H2O = (9Z)-octadecenoate + CoA + H(+). It catalyses the reaction (9Z,12Z)-octadecadienoyl-CoA + H2O = (9Z,12Z)-octadecadienoate + CoA + H(+). It carries out the reaction eicosanoyl-CoA + H2O = eicosanoate + CoA + H(+). The enzyme catalyses (5Z,8Z,11Z,14Z)-eicosatetraenoyl-CoA + H2O = (5Z,8Z,11Z,14Z)-eicosatetraenoate + CoA + H(+). The catalysed reaction is (3S)-3-hydroxy-3-methylglutaryl-CoA + H2O = 3-hydroxy-3-methylglutarate + CoA + H(+). It catalyses the reaction 3alpha,7alpha,12alpha-trihydroxy-5beta-cholestan-26-oyl-CoA + H2O = 3alpha,7alpha,12alpha-trihydroxy-5beta-cholestan-26-oate + CoA + H(+). It carries out the reaction 2-methyloctadecanoyl-CoA + H2O = 2-methyloctadecanoate + CoA + H(+). The enzyme catalyses prostaglandin F2alpha-CoA + H2O = prostaglandin F2alpha + CoA + H(+). Its activity is regulated as follows. Inhibited by CoASH (IC(50)=10-15 uM). Also inhibited by cysteine-reactive agents. Functionally, catalyzes the hydrolysis of acyl-CoAs into free fatty acids and coenzyme A (CoASH), regulating their respective intracellular levels. Displays no strong substrate specificity with respect to the carboxylic acid moiety of Acyl-CoAs. Hydrolyzes medium length (C2 to C20) straight-chain, saturated and unsaturated acyl-CoAS but is inactive towards substrates with longer aliphatic chains. Moreover, it catalyzes the hydrolysis of CoA esters of bile acids, such as choloyl-CoA and chenodeoxycholoyl-CoA and competes with bile acid CoA:amino acid N-acyltransferase (BAAT). Is also able to hydrolyze CoA esters of dicarboxylic acids. It is involved in the metabolic regulation of peroxisome proliferation. This chain is Acyl-coenzyme A thioesterase 8 (Acot8), found in Rattus norvegicus (Rat).